Here is a 258-residue protein sequence, read N- to C-terminus: Venom plasminogen activator TSV-PA (258 aa).

The N-terminal stretch at 1-18 (MELIRVLANLLILQLSYA) is a signal peptide. A propeptide spanning residues 19–24 (QKSSEL) is cleaved from the precursor. In terms of domain architecture, Peptidase S1 spans 25–249 (VFGGDECNIN…YLDWIKSIIA (225 aa)). 6 cysteine pairs are disulfide-bonded: Cys31–Cys163, Cys50–Cys66, Cys98–Cys256, Cys142–Cys210, Cys174–Cys189, and Cys200–Cys225. Residues His65 and Asp110 each act as charge relay system in the active site. N-linked (GlcNAc...) asparagine glycosylation is present at Asn185. Ser204 serves as the catalytic Charge relay system.

It belongs to the peptidase S1 family. Snake venom subfamily. As to quaternary structure, monomer. As to expression, expressed by the venom gland.

Its subcellular location is the secreted. Its function is as follows. Snake venom serine protease that activates plasminogen. The protein is Venom plasminogen activator TSV-PA of Trimeresurus stejnegeri (Chinese green tree viper).